The chain runs to 279 residues: 4-diphosphocytidyl-2-C-methyl-D-erythritol kinase (279 aa).

The active site involves lysine 11. An ATP-binding site is contributed by 95–105 (PVAAGLGGGSS). Aspartate 137 is a catalytic residue.

This sequence belongs to the GHMP kinase family. IspE subfamily.

The catalysed reaction is 4-CDP-2-C-methyl-D-erythritol + ATP = 4-CDP-2-C-methyl-D-erythritol 2-phosphate + ADP + H(+). The protein operates within isoprenoid biosynthesis; isopentenyl diphosphate biosynthesis via DXP pathway; isopentenyl diphosphate from 1-deoxy-D-xylulose 5-phosphate: step 3/6. Functionally, catalyzes the phosphorylation of the position 2 hydroxy group of 4-diphosphocytidyl-2C-methyl-D-erythritol. This Geobacter sulfurreducens (strain ATCC 51573 / DSM 12127 / PCA) protein is 4-diphosphocytidyl-2-C-methyl-D-erythritol kinase.